A 604-amino-acid chain; its full sequence is Netrin-1 (604 aa).

A signal peptide spans 1-24; that stretch reads MMRAVWEALAALAAVACLVGAVRG. Residues 47–284 enclose the Laminin N-terminal domain; it reads HPRRCIPDFV…AVSDLQVGGR (238 aa). Asparagine 95, asparagine 116, and asparagine 131 each carry an N-linked (GlcNAc...) asparagine glycan. Disulfide bonds link cysteine 119–cysteine 152, cysteine 285–cysteine 294, cysteine 287–cysteine 304, cysteine 306–cysteine 315, cysteine 318–cysteine 338, cysteine 341–cysteine 350, cysteine 343–cysteine 368, cysteine 371–cysteine 380, cysteine 383–cysteine 401, cysteine 404–cysteine 416, cysteine 406–cysteine 423, cysteine 425–cysteine 434, cysteine 437–cysteine 451, cysteine 472–cysteine 544, and cysteine 491–cysteine 601. Laminin EGF-like domains are found at residues 285–340, 341–403, and 404–453; these read CKCN…ECVA, CNCN…ACKA, and CDCH…PCIK. Asparagine 417 carries an N-linked (GlcNAc...) asparagine glycan. The NTR domain maps to 472–601; that stretch reads CDSYCKASKG…FQQREKKGKC (130 aa). The Cell attachment site signature appears at 530–532; it reads RGD.

In terms of assembly, binds to its receptors; DCC, UNC5A, UNC5B, UNC5C and probably UNC5D. Binds to its receptor; DSCAM. Interacts with APP. In the embryo, widely expressed in the developing nervous system and in mesodermal tissues.

The protein localises to the secreted. The protein resides in the cytoplasm. Its function is as follows. Netrins control guidance of CNS commissural axons and peripheral motor axons. Its association with either DCC or some UNC5 receptors will lead to axon attraction or repulsion, respectively. Binding to UNC5C might cause dissociation of UNC5C from polymerized TUBB3 in microtubules and thereby lead to increased microtubule dynamics and axon repulsion. Involved in dorsal root ganglion axon projection towards the spinal cord. It also serves as a survival factor via its association with its receptors which prevent the initiation of apoptosis. Involved in colorectal tumorigenesis by regulating apoptosis. The chain is Netrin-1 (Ntn1) from Mus musculus (Mouse).